We begin with the raw amino-acid sequence, 54 residues long: SPbeta prophage-derived uncharacterized protein YoqE (54 aa).

This chain is SPbeta prophage-derived uncharacterized protein YoqE (yoqE), found in Bacillus subtilis (strain 168).